The chain runs to 143 residues: Holo-[acyl-carrier-protein] synthase (143 aa).

Mg(2+) contacts are provided by D9 and E63.

Belongs to the P-Pant transferase superfamily. AcpS family. The cofactor is Mg(2+).

It localises to the cytoplasm. The enzyme catalyses apo-[ACP] + CoA = holo-[ACP] + adenosine 3',5'-bisphosphate + H(+). In terms of biological role, transfers the 4'-phosphopantetheine moiety from coenzyme A to a Ser of acyl-carrier-protein. The protein is Holo-[acyl-carrier-protein] synthase of Burkholderia pseudomallei (strain 1106a).